A 437-amino-acid polypeptide reads, in one-letter code: Elongation factor Tu, mitochondrial (437 aa).

The transit peptide at 1 to 38 (MSALLPRLLTRTAFKASGKLLRLSSVISRTFSQTTTSY) directs the protein to the mitochondrion. The tr-type G domain occupies 46 to 242 (KPHVNIGTIG…AVDEYIPTPE (197 aa)). A G1 region spans residues 55–62 (GHVDHGKT). 55 to 62 (GHVDHGKT) contributes to the GTP binding site. The interval 96-100 (GITIS) is G2. The interval 117–120 (DCPG) is G3. GTP contacts are provided by residues 117–121 (DCPGH) and 172–175 (NKVD). Residues 172–175 (NKVD) form a G4 region. Residues 210-212 (SAL) form a G5 region.

Belongs to the TRAFAC class translation factor GTPase superfamily. Classic translation factor GTPase family. EF-Tu/EF-1A subfamily. Post-translationally, the precursor is processed in two steps involving mitochondrial intermediate peptidase (MIP) and mitochondrial processing peptidase (MPP).

The protein resides in the mitochondrion. It functions in the pathway protein biosynthesis; polypeptide chain elongation. Its function is as follows. G-protein that, in its active GTP-bound form, binds to and delivers aminoacyl-tRNA to the A-site of ribosomes during protein biosynthesis. In the presence of a correct codon-anticodon match between the aminoacyl-tRNA and the A-site codon of the ribosome-bound mRNA, the ribosome acts as a GTPase activator and the GTP is hydrolyzed. The inactive GDP-bound form leaves the ribosome and must be recycled before binding another molecule of aminoacyl-tRNA. Required for mitochondrial protein biosynthesis and maintenance of mitochondrial DNA. The chain is Elongation factor Tu, mitochondrial (TUF1) from Saccharomyces cerevisiae (strain ATCC 204508 / S288c) (Baker's yeast).